A 139-amino-acid polypeptide reads, in one-letter code: Plastocyanin (139 aa).

The N-terminal stretch at 1–34 (MKLIAASLRRLSLAVLTVLLVVSSFAVFTPSAAA) is a signal peptide. In terms of domain architecture, Plastocyanin-like spans 35–135 (ETYTVKLGSD…HRGAGMVGKI (101 aa)). Cu cation contacts are provided by His73, Cys123, His126, and Met131.

It belongs to the plastocyanin family. Cu(2+) serves as cofactor.

It is found in the cellular thylakoid membrane. Functionally, participates in electron transfer between P700 and the cytochrome b6-f complex in photosystem I. This Trichormus variabilis (strain ATCC 29413 / PCC 7937) (Anabaena variabilis) protein is Plastocyanin (petE).